The sequence spans 449 residues: BPI fold-containing family B member 6 (449 aa).

Residues 1–18 (MLCSLSLVLCGLLAGTRA) form the signal peptide. Asn-115 carries an N-linked (GlcNAc...) asparagine glycan. An intrachain disulfide couples Cys-138 to Cys-172.

The protein belongs to the BPI/LBP/Plunc superfamily. BPI/LBP family.

The protein localises to the secreted. The sequence is that of BPI fold-containing family B member 6 (Bpifb6) from Mus musculus (Mouse).